We begin with the raw amino-acid sequence, 84 residues long: Beta-cardiotoxin CTX27 (84 aa).

An N-terminal signal peptide occupies residues 1–21 (MKTLLLTLVVVTIVCLDLGYT). 4 disulfides stabilise this stretch: C24–C43, C36–C61, C65–C76, and C77–C82.

Belongs to the three-finger toxin family. Short-chain subfamily. Aminergic toxin sub-subfamily. As to expression, expressed by the venom gland.

Its subcellular location is the secreted. In terms of biological role, acts as a beta-blocker by binding to beta-1 and beta-2 adrenergic receptors (ADRB1 and ADRB2). It dose-dependently decreases the heart rate (bradycardia), whereas conventional cardiotoxins increases it. At 100 mg/kg, intraperitoneal injection into mice provokes labored breathing, impaired locomotion, lack of response to external stimuli, and death (after 30 minutes). This is Beta-cardiotoxin CTX27 from Ophiophagus hannah (King cobra).